Consider the following 149-residue polypeptide: Large ribosomal subunit protein bL9 (149 aa).

This sequence belongs to the bacterial ribosomal protein bL9 family.

In terms of biological role, binds to the 23S rRNA. This chain is Large ribosomal subunit protein bL9, found in Actinobacillus pleuropneumoniae serotype 3 (strain JL03).